The primary structure comprises 447 residues: 3-phosphoshikimate 1-carboxyvinyltransferase (447 aa).

The 3-phosphoshikimate site is built by lysine 25, serine 26, and arginine 30. Position 25 (lysine 25) interacts with phosphoenolpyruvate. Residues glycine 96 and arginine 124 each contribute to the phosphoenolpyruvate site. Residues serine 171, serine 172, glutamine 173, serine 203, aspartate 325, and lysine 352 each coordinate 3-phosphoshikimate. Residue glutamine 173 participates in phosphoenolpyruvate binding. Residue aspartate 325 is the Proton acceptor of the active site. 3 residues coordinate phosphoenolpyruvate: arginine 356, arginine 400, and lysine 425.

Belongs to the EPSP synthase family. Monomer.

The protein localises to the cytoplasm. It catalyses the reaction 3-phosphoshikimate + phosphoenolpyruvate = 5-O-(1-carboxyvinyl)-3-phosphoshikimate + phosphate. The protein operates within metabolic intermediate biosynthesis; chorismate biosynthesis; chorismate from D-erythrose 4-phosphate and phosphoenolpyruvate: step 6/7. Its function is as follows. Catalyzes the transfer of the enolpyruvyl moiety of phosphoenolpyruvate (PEP) to the 5-hydroxyl of shikimate-3-phosphate (S3P) to produce enolpyruvyl shikimate-3-phosphate and inorganic phosphate. This is 3-phosphoshikimate 1-carboxyvinyltransferase from Bordetella petrii (strain ATCC BAA-461 / DSM 12804 / CCUG 43448).